Reading from the N-terminus, the 541-residue chain is DNA polymerase epsilon subunit B (541 aa).

The protein belongs to the DNA polymerase epsilon subunit B family. In terms of assembly, heterotetramer. Consists of four subunits: POL2, DPB2, DPB3 and DPB4.

It localises to the nucleus. As accessory component of the DNA polymerase epsilon (DNA polymerase II) participates in chromosomal DNA replication. This is DNA polymerase epsilon subunit B (DPB2) from Cryptococcus neoformans var. neoformans serotype D (strain B-3501A) (Filobasidiella neoformans).